We begin with the raw amino-acid sequence, 269 residues long: Chymotrypsin-like elastase family member 2A (269 aa).

Residues 1–16 form the signal peptide; it reads MIRTLLLSTLVAGALS. A propeptide spans 17–28 (activation peptide); the sequence is CGDPTYPPYVTR. Residues 29-267 form the Peptidase S1 domain; it reads VVGGEEARPN…YIDWINSVIA (239 aa). Cys58 and Cys74 are joined by a disulfide. Catalysis depends on charge relay system residues His73 and Asp121. 3 disulfides stabilise this stretch: Cys155/Cys222, Cys186/Cys202, and Cys212/Cys243. Ser216 acts as the Charge relay system in catalysis.

The protein belongs to the peptidase S1 family. Elastase subfamily. In terms of assembly, interacts with CPA1. Interacts with SERPINA1. In terms of tissue distribution, expressed in pancreas. Not detected in keratinocytes. Detected in exocrine secretions of the pancreas (at protein level). Also expressed in a small fraction of cells in pancreatic islets, adrenal cortex, intestinal glands and colonic lymphoid follicles (at protein level). Detected in plasma.

It localises to the secreted. It catalyses the reaction Preferential cleavage: Leu-|-Xaa, Met-|-Xaa and Phe-|-Xaa. Hydrolyzes elastin.. Elastase that enhances insulin signaling and might have a physiologic role in cellular glucose metabolism. Circulates in plasma and reduces platelet hyperactivation, triggers both insulin secretion and degradation, and increases insulin sensitivity. This is Chymotrypsin-like elastase family member 2A from Homo sapiens (Human).